Consider the following 163-residue polypeptide: R-phycoerythrin alpha chain (163 aa).

(2R,3E)-phycoerythrobilin is bound by residues C82 and C139.

It belongs to the phycobiliprotein family. In terms of assembly, heterodimer of an alpha and a beta chain. Contains two covalently linked bilin chromophores.

It localises to the plastid. The protein resides in the chloroplast thylakoid membrane. Functionally, light-harvesting photosynthetic bile pigment-protein from the phycobiliprotein complex. The protein is R-phycoerythrin alpha chain (cpeA) of Aglaothamnion neglectum (Red alga).